The following is a 259-amino-acid chain: Heat-labile enterotoxin IIA, A chain (259 aa).

A signal peptide spans 1–18; it reads MIKHVLLFFVFISFSVSA. 23-37 contacts NAD(+); the sequence is RADSRTPDEIRRAGG. The active site involves E128. Cysteines 203 and 215 form a disulfide.

Belongs to the enterotoxin A family. In terms of assembly, heterohexamer of one A chain and of five B chains.

The biological activity of the toxin is produced by the A chain, which activates intracellular adenyl cyclase. The sequence is that of Heat-labile enterotoxin IIA, A chain from Escherichia coli.